A 959-amino-acid polypeptide reads, in one-letter code: DNA polymerase 1 (959 aa).

Positions 1 to 110 (MRVRGGQEAA…LTLEPSPQSE (110 aa)) are disordered. A compositionally biased stretch (basic and acidic residues) spans 44-60 (KKPEPPPTLHREREPES).

This sequence belongs to the DNA polymerase type-B family.

The enzyme catalyses DNA(n) + a 2'-deoxyribonucleoside 5'-triphosphate = DNA(n+1) + diphosphate. This is DNA polymerase 1 (polA) from Aeropyrum pernix (strain ATCC 700893 / DSM 11879 / JCM 9820 / NBRC 100138 / K1).